The primary structure comprises 168 residues: Chemoreceptor glutamine deamidase CheD (168 aa).

Belongs to the CheD family. In terms of assembly, forms a complex with CheC.

The catalysed reaction is L-glutaminyl-[protein] + H2O = L-glutamyl-[protein] + NH4(+). Its function is as follows. Deamidates glutamine residues to glutamate on methyl-accepting chemotaxis receptors (MCPs). CheD-mediated MCP deamidation is required for productive communication of the conformational signals of the chemoreceptors to the CheA kinase. The sequence is that of Chemoreceptor glutamine deamidase CheD from Bacillus licheniformis (strain ATCC 14580 / DSM 13 / JCM 2505 / CCUG 7422 / NBRC 12200 / NCIMB 9375 / NCTC 10341 / NRRL NRS-1264 / Gibson 46).